Here is a 154-residue protein sequence, read N- to C-terminus: Low molecular weight protein-tyrosine-phosphatase PtpA (154 aa).

Cysteine 8 functions as the Nucleophile in the catalytic mechanism. Arginine 14 is a catalytic residue. Catalysis depends on aspartate 120, which acts as the Proton donor.

It belongs to the low molecular weight phosphotyrosine protein phosphatase family.

It carries out the reaction O-phospho-L-tyrosyl-[protein] + H2O = L-tyrosyl-[protein] + phosphate. Functionally, dephosphorylates the phosphotyrosine-containing proteins. This is Low molecular weight protein-tyrosine-phosphatase PtpA (ptpA) from Staphylococcus haemolyticus (strain JCSC1435).